A 227-amino-acid chain; its full sequence is (S)-2-haloacid dehalogenase (227 aa).

D10 acts as the Nucleophile in catalysis. Residues 11-12 (LY), R41, and 118-119 (SN) contribute to the an (S)-2-haloacid site. Residues 175 to 180 (SSNAWD) are important for catalytic activity.

The protein belongs to the HAD-like hydrolase superfamily. S-2-haloalkanoic acid dehalogenase family.

It carries out the reaction an (S)-2-haloacid + H2O = a (2R)-2-hydroxycarboxylate + a halide anion + H(+). The catalysed reaction is (S)-2-chloropropanoate + H2O = (R)-lactate + chloride + H(+). Functionally, catalyzes the hydrolytic dehalogenation of small (S)-2-haloalkanoic acids to yield the corresponding (R)-2-hydroxyalkanoic acids. Acts on acids of short chain lengths, C(2) to C(4), with inversion of configuration at C-2. Active with 2-halogenated carboxylic acids and converts only the S-isomer (or L-isomer) of 2-chloropropionic acid with inversion of configuration to produce R-lactate (or D-isomer). This Pseudomonas fluorescens protein is (S)-2-haloacid dehalogenase (dhl VII).